Reading from the N-terminus, the 606-residue chain is Putative helicase 172L (606 aa).

The Helicase ATP-binding domain maps to 59–264 (GEKTWGVRGG…WAQLRFCGYK (206 aa)). An ATP-binding site is contributed by 72 to 79 (LCMGLGKT). The 150-residue stretch at 437–586 (YIKSSNFEIS…ASYLEGKERI (150 aa)) folds into the Helicase C-terminal domain.

It belongs to the SNF2/RAD54 helicase family.

The protein is Putative helicase 172L of Invertebrate iridescent virus 6 (IIV-6).